A 620-amino-acid polypeptide reads, in one-letter code: bZIP transcription factor 49 (620 aa).

Topologically, residues 1–287 are cytoplasmic; that stretch reads MAEPVLEDTY…VAKVKKFKKV (287 aa). Over residues 109-135 the composition is skewed to polar residues; that stretch reads SSCYNRESPTDSDFSGTSQSLSFSGQD. The interval 109-155 is disordered; the sequence is SSCYNRESPTDSDFSGTSQSLSFSGQDSAKRKTEIEEDSSDESRRLG. Residues 172 to 235 form the bZIP domain; that stretch reads EKKKNVRLVR…VTLRQQMGTR (64 aa). Positions 173 to 205 are basic motif; it reads KKKNVRLVRNRESAHLSRQRKKHYVEELEDKVK. The segment at 211–218 is leucine-zipper; sequence ISELSSKM. A helical membrane pass occupies residues 288-308; that stretch reads ASFSVFGFLFCMFLFGALVNI. Over 309 to 620 the chain is Lumenal; that stretch reads SYGEYKSNYV…RPDVPHLMTS (312 aa). Disordered regions lie at residues 343–364, 398–460, and 505–557; these read DSDQGVGRNVSETENLGPPRNS, ARDS…SNDQ, and PASP…RETK. Asn351 and Asn363 each carry an N-linked (GlcNAc...) asparagine glycan. A compositionally biased stretch (polar residues) spans 352–364; sequence VSETENLGPPRNS. Basic and acidic residues-rich tracts occupy residues 398–409 and 432–441; these read ARDSETKNEEGK and RTRDVSKHLY. Polar residues-rich tracts occupy residues 447-460 and 508-519; these read GLSSSGSDDASNDQ and PHTQQCKNTSDT. N-linked (GlcNAc...) asparagine glycosylation occurs at Asn515. Residues 526 to 529 carry the RRIL cleavage motif motif; it reads RRIL. N-linked (GlcNAc...) asparagine glycosylation is found at Asn539 and Asn546. Residues 540–557 are compositionally biased toward basic and acidic residues; the sequence is LTKEDHNSSSKDKFRETK.

The protein belongs to the bZIP family. In terms of assembly, interacts with BZIP28.

It localises to the endoplasmic reticulum membrane. Its subcellular location is the nucleus. Its function is as follows. Transcriptional activator involved in stress responses. The protein is bZIP transcription factor 49 of Arabidopsis thaliana (Mouse-ear cress).